A 346-amino-acid chain; its full sequence is MPTAAPRWILHVDLDQFLASVELLRHPELAGLPVIVGGNGDPTEPRKVVTCASYEARAYGVRAGMPLRTAARRCPEATFLPSNPAAYNAASEEVVALLRDLGYPVEVWGWDEAYLAVAPGTPDDPIEVAEEIRKVILSQTGLSCSIGISDNKQRAKIATGLAKPAGIYQLTDANWMAIMGDRTVEALWGVGPKTTKRLAKLGINTVYQLAHTDSGLLMSTFGPRTALWLLLAKGGGDTEVSAQAWVPRSRSHAVTFPRDLTCRSEMESAVTELAQRTLNEVVASSRTVTRVAVTVRTATFYTRTKIRKLQAPSTDPDVITAAARHVLDLFELDRPVRLLGVRLELA.

The 183-residue stretch at 9 to 191 (ILHVDLDQFL…RTVEALWGVG (183 aa)) folds into the UmuC domain. 2 residues coordinate Mg(2+): D13 and D111. E112 is a catalytic residue.

Belongs to the DNA polymerase type-Y family. In terms of assembly, monomer. Requires Mg(2+) as cofactor.

Its subcellular location is the cytoplasm. The catalysed reaction is DNA(n) + a 2'-deoxyribonucleoside 5'-triphosphate = DNA(n+1) + diphosphate. In terms of biological role, poorly processive, error-prone DNA polymerase involved in untargeted mutagenesis. Copies undamaged DNA at stalled replication forks, which arise in vivo from mismatched or misaligned primer ends. These misaligned primers can be extended by PolIV. Exhibits no 3'-5' exonuclease (proofreading) activity. May be involved in translesional synthesis, in conjunction with the beta clamp from PolIII. In Mycobacterium bovis (strain ATCC BAA-935 / AF2122/97), this protein is DNA polymerase IV 2 (dinB2).